A 407-amino-acid chain; its full sequence is SERPINE1 mRNA-binding protein 1 (407 aa).

At Ser25 the chain carries Phosphoserine. A disordered region spans residues 33-227 (AAENKKKEAG…GSGSHNWGTV (195 aa)). Positions 51-68 (AKSAAQAAAQTNSNAAGK) are enriched in low complexity. Lys52 is modified (N6-acetyllysine; alternate). Lys52 participates in a covalent cross-link: Glycyl lysine isopeptide (Lys-Gly) (interchain with G-Cter in SUMO1); alternate. Lys68 bears the N6-acetyllysine mark. 3 stretches are compositionally biased toward basic and acidic residues: residues 70–80 (LRKESQKDRKN), 89–114 (ADKK…RRPD), and 122–162 (KLID…ERPI). Residue Lys102 forms a Glycyl lysine isopeptide (Lys-Gly) (interchain with G-Cter in SUMO2) linkage. N6-acetyllysine occurs at positions 122 and 140. Residues 164-182 (GRGGLGRGRGGRGRGMGRG) are compositionally biased toward gly residues. Arg165 and Arg188 each carry omega-N-methylarginine. Basic and acidic residues predominate over residues 183–199 (DGFDSRGKREFDRHSGS). Phosphoserine occurs at positions 197, 199, 203, 205, and 208. The residue at position 211 (Lys211) is an N6-acetyllysine; alternate. A Glycyl lysine isopeptide (Lys-Gly) (interchain with G-Cter in SUMO2); alternate cross-link involves residue Lys211. Arg216 bears the Omega-N-methylarginine mark. A Phosphoserine modification is found at Ser221. Position 226 is a phosphothreonine (Thr226). A Glycyl lysine isopeptide (Lys-Gly) (interchain with G-Cter in SUMO1); alternate cross-link involves residue Lys228. A Glycyl lysine isopeptide (Lys-Gly) (interchain with G-Cter in SUMO2); alternate cross-link involves residue Lys228. Residues Leu231, Ser234, and Tyr237 each carry the phosphoserine modification. Residue Ser234 is modified to Phosphothreonine. Lys240 bears the Phosphothreonine mark. Over residues 242–256 (ISYNCSDLDQSNVTE) the composition is skewed to polar residues. Disordered regions lie at residues 242 to 288 (ISYN…KEMT) and 327 to 407 (SKSE…PALA). Positions 261-274 (GEEHPVADTENKEN) are enriched in basic and acidic residues. Lys280 participates in a covalent cross-link: Glycyl lysine isopeptide (Lys-Gly) (interchain with G-Cter in SUMO2). The span at 327–341 (SKSEEAHAEDSVMDH) shows a compositional bias: basic and acidic residues. Lys328 bears the N6-acetyllysine mark. Ser329 carries the post-translational modification Phosphoserine. The span at 362–371 (GRPGRGGRGG) shows a compositional bias: gly residues. 3 positions are modified to omega-N-methylarginine: Arg363, Arg366, and Arg369. Ser391 and Ser393 each carry phosphoserine.

This sequence belongs to the SERBP1-HABP4 family. As to quaternary structure, associates with mature 80S ribosomes. Interacts with EEF2/eEF2; interaction sequesters EEF2/eEF2 at the A-site of the ribosome, thereby blocking the interaction sites of the mRNA-tRNA complex, promoting ribosome stabilization and hibernation. Interacts with SPIN1. Interacts with CHD3 and TDRD3. Interacts with ZDHHC17 (via ANK repeats). Post-translationally, phosphorylation by MTOR inhibits SERBP1 and relieves ribosome hibernation.

Its subcellular location is the cytoplasm. The protein resides in the nucleus. It is found in the perinuclear region. Its function is as follows. Ribosome-binding protein that promotes ribosome hibernation, a process during which ribosomes are stabilized in an inactive state and preserved from proteasomal degradation. Acts via its association with EEF2/eEF2 factor, sequestering EEF2/eEF2 at the A-site of the ribosome and promoting ribosome stabilization and storage in an inactive state. May also play a role in the regulation of mRNA stability: binds to the 3'-most 134 nt of the SERPINE1/PAI1 mRNA, a region which confers cyclic nucleotide regulation of message decay. Seems to play a role in PML-nuclear bodies formation. This chain is SERPINE1 mRNA-binding protein 1, found in Mus musculus (Mouse).